We begin with the raw amino-acid sequence, 434 residues long: DNA primase DnaG (434 aa).

Positions 171-250 constitute a Toprim domain; sequence DAIIIVEGRA…AFSPRRRSVE (80 aa). Mg(2+) contacts are provided by glutamate 177, aspartate 219, and aspartate 221. Residues 290–319 form a disordered region; the sequence is GEEEHSSVSQKEEGNNTTPDVPADLPEEPP. The span at 292–303 shows a compositional bias: basic and acidic residues; it reads EEHSSVSQKEEG.

This sequence belongs to the archaeal DnaG primase family. As to quaternary structure, forms a ternary complex with MCM helicase and DNA. It depends on Mg(2+) as a cofactor.

The catalysed reaction is ssDNA + n NTP = ssDNA/pppN(pN)n-1 hybrid + (n-1) diphosphate.. Its function is as follows. RNA polymerase that catalyzes the synthesis of short RNA molecules used as primers for DNA polymerase during DNA replication. In Methanocorpusculum labreanum (strain ATCC 43576 / DSM 4855 / Z), this protein is DNA primase DnaG.